A 147-amino-acid polypeptide reads, in one-letter code: Globin (147 aa).

The Globin domain occupies 1–147; the sequence is GLSAEQKTAL…LLGVLIENHQ (147 aa). Heme b contacts are provided by His-66 and His-98.

This sequence belongs to the globin family. As to quaternary structure, homodimer.

This chain is Globin, found in Tritia mutabilis (Sea snail).